A 177-amino-acid polypeptide reads, in one-letter code: Alkyl hydroperoxide reductase AhpD (177 aa).

The active-site Proton donor is Cys-131. Cys-131 and Cys-134 are disulfide-bonded. Catalysis depends on Cys-134, which acts as the Cysteine sulfenic acid (-SOH) intermediate.

This sequence belongs to the AhpD family. In terms of assembly, homotrimer.

It carries out the reaction N(6)-[(R)-dihydrolipoyl]-L-lysyl-[lipoyl-carrier protein] + a hydroperoxide = N(6)-[(R)-lipoyl]-L-lysyl-[lipoyl-carrier protein] + an alcohol + H2O. In terms of biological role, antioxidant protein with alkyl hydroperoxidase activity. Required for the reduction of the AhpC active site cysteine residues and for the regeneration of the AhpC enzyme activity. This Streptomyces avermitilis (strain ATCC 31267 / DSM 46492 / JCM 5070 / NBRC 14893 / NCIMB 12804 / NRRL 8165 / MA-4680) protein is Alkyl hydroperoxide reductase AhpD.